Reading from the N-terminus, the 555-residue chain is NADH-ubiquinone oxidoreductase chain 5 (555 aa).

Transmembrane regions (helical) follow at residues 37-57 (LAMT…LYAI), 69-89 (FYII…SDNY), 90-110 (IMMF…ISFW), 133-153 (FFML…FDTL), 155-175 (LAAP…LLLA), 197-217 (TPVS…YVLV), 230-250 (LIGI…IAIV), 257-275 (VIAL…AIGI), 287-307 (CHAF…HSYI), 323-343 (LPFS…IPGL), 366-388 (ILYY…VLYL), 406-426 (ENIR…FIGF), 454-474 (WYIK…LVYI), 494-516 (IYYD…GYLN), and 534-554 (RALT…FFFY).

This sequence belongs to the complex I subunit 5 family.

It localises to the mitochondrion inner membrane. It catalyses the reaction a ubiquinone + NADH + 5 H(+)(in) = a ubiquinol + NAD(+) + 4 H(+)(out). In terms of biological role, core subunit of the mitochondrial membrane respiratory chain NADH dehydrogenase (Complex I) that is believed to belong to the minimal assembly required for catalysis. Complex I functions in the transfer of electrons from NADH to the respiratory chain. The immediate electron acceptor for the enzyme is believed to be ubiquinone. In Candida parapsilosis (Yeast), this protein is NADH-ubiquinone oxidoreductase chain 5 (ND5).